The primary structure comprises 629 residues: Hemocyanin F chain (629 aa).

H172, H176, H203, H324, H328, and H364 together coordinate Cu cation. 2 N-linked (GlcNAc...) asparagine glycosylation sites follow: N395 and N447. Over residues 503 to 513 (SESSVTVSHTP) the composition is skewed to polar residues. The interval 503–522 (SESSVTVSHTPTFEELQRGE) is disordered. An N-linked (GlcNAc...) asparagine glycan is attached at N527. Cysteines 534 and 582 form a disulfide. A glycan (N-linked (GlcNAc...) asparagine) is linked at N615.

The protein belongs to the tyrosinase family. Hemocyanin subfamily. In terms of assembly, tarantula hemocyanin is a 24-chain polymer with seven different chains identified. Hemolymph.

It is found in the secreted. The protein resides in the extracellular space. Its function is as follows. Hemocyanins are copper-containing oxygen carriers occurring freely dissolved in the hemolymph of many mollusks and arthropods. The polypeptide is Hemocyanin F chain (HCF) (Aphonopelma sp. (American tarantula)).